Reading from the N-terminus, the 102-residue chain is Small ribosomal subunit protein uS10 (102 aa).

It belongs to the universal ribosomal protein uS10 family. As to quaternary structure, part of the 30S ribosomal subunit.

Functionally, involved in the binding of tRNA to the ribosomes. In Oceanobacillus iheyensis (strain DSM 14371 / CIP 107618 / JCM 11309 / KCTC 3954 / HTE831), this protein is Small ribosomal subunit protein uS10.